Here is an 86-residue protein sequence, read N- to C-terminus: Sodium channel neurotoxin MeuNaTxalpha-4 (86 aa).

The first 19 residues, 1 to 19 (MNYLILISFALLVITGVES), serve as a signal peptide directing secretion. Residues 21 to 85 (RDAYIAKPHN…VPIRIPGKCH (65 aa)) form the LCN-type CS-alpha/beta domain. Intrachain disulfides connect Cys31-Cys84, Cys35-Cys57, Cys43-Cys67, and Cys47-Cys69. A propeptide (removed by a carboxypeptidase) is located at residue Arg86.

The protein belongs to the long (4 C-C) scorpion toxin superfamily. Sodium channel inhibitor family. Alpha subfamily. In terms of tissue distribution, expressed by the venom gland.

Its subcellular location is the secreted. Its function is as follows. Alpha toxins bind voltage-independently at site-3 of sodium channels (Nav) and inhibit the inactivation of the activated channels, thereby blocking neuronal transmission. This toxin inhibits inactivation of drosophila DmNav1 (EC(50)=130 nM). This chain is Sodium channel neurotoxin MeuNaTxalpha-4, found in Mesobuthus eupeus (Lesser Asian scorpion).